A 174-amino-acid polypeptide reads, in one-letter code: Shikimate kinase 2 (174 aa).

Residue 12 to 17 (GCGKTT) participates in ATP binding. Mg(2+) contacts are provided by threonine 16 and aspartate 32. Aspartate 34, arginine 58, and glycine 79 together coordinate substrate. Residues 112–126 (EAYPLADQRPTLTGR) form an LID domain region. ATP is bound at residue arginine 120. Arginine 139 is a binding site for substrate. Residue glutamine 155 participates in ATP binding.

This sequence belongs to the shikimate kinase family. AroL subfamily. Monomer. It depends on Mg(2+) as a cofactor.

Its subcellular location is the cytoplasm. It carries out the reaction shikimate + ATP = 3-phosphoshikimate + ADP + H(+). Its pathway is metabolic intermediate biosynthesis; chorismate biosynthesis; chorismate from D-erythrose 4-phosphate and phosphoenolpyruvate: step 5/7. Its function is as follows. Catalyzes the specific phosphorylation of the 3-hydroxyl group of shikimic acid using ATP as a cosubstrate. This is Shikimate kinase 2 from Erwinia tasmaniensis (strain DSM 17950 / CFBP 7177 / CIP 109463 / NCPPB 4357 / Et1/99).